The primary structure comprises 80 residues: CDC42 small effector protein 1 (80 aa).

S-palmitoyl cysteine attachment occurs at residues Cys-10 and Cys-11. Residues 30 to 43 (IGEPMNFVHLTHIG) form the CRIB domain. Residues 48 to 80 (GAGDGLAMTGAVQEQMRSKGNHRDRPWSNSRAL) form a disordered region.

It belongs to the CDC42SE/SPEC family. As to quaternary structure, interacts with CDC42 (in GTP-bound form). Interacts weakly with RAC1 and not at all with RHOA.

The protein resides in the cytoplasm. Its subcellular location is the cytoskeleton. The protein localises to the cell membrane. Probably involved in the organization of the actin cytoskeleton by acting downstream of CDC42, inducing actin filament assembly. Alters CDC42-induced cell shape changes. In activated T-cells, may play a role in CDC42-mediated F-actin accumulation at the immunological synapse. May play a role in early contractile events in phagocytosis in macrophages. The sequence is that of CDC42 small effector protein 1 (Cdc42se1) from Mus musculus (Mouse).